A 253-amino-acid chain; its full sequence is MAHYKTEQDDWLIIYLKYLLFVFNFFFWVGGAAVLAVGIWTLVEKSGYLSVLASSTFAASAYILIFAGVLVMVTGFLGFGAILWERKGCLSTYFCLLLVIFLVELVAGVLAHVYYQRLSDELKQHLNRTLAENYGQPGATQITASVDRLQQDFKCCGSNSSADWQHSTYILLREAEGRQVPDSCCKTVVVRCGQRAHPSNIYKVEGGCLTKLEQFLADHLLLMGAVGIGVACLQICGMVLTCCLHQRLQRHFY.

3 helical membrane-spanning segments follow: residues 19 to 39 (LLFV…AVGI), 63 to 83 (ILIF…GAIL), and 93 to 113 (YFCL…LAHV). Residue asparagine 127 is glycosylated (N-linked (GlcNAc...) asparagine). A helical transmembrane segment spans residues 220–240 (LLLMGAVGIGVACLQICGMVL).

The protein belongs to the tetraspanin (TM4SF) family.

Its subcellular location is the membrane. The protein is Tetraspanin-11 (TSPAN11) of Homo sapiens (Human).